The primary structure comprises 291 residues: Undecaprenyl-diphosphatase 2 (291 aa).

The next 6 helical transmembrane spans lie at 39–59 (PGAA…LIYF), 85–105 (ARMG…GLTL), 118–138 (ITAT…RMAA), 198–218 (AARY…VFEL), 231–251 (PTLF…AWFM), and 262–282 (FVWY…VGVL).

It belongs to the UppP family.

It localises to the cell membrane. It catalyses the reaction di-trans,octa-cis-undecaprenyl diphosphate + H2O = di-trans,octa-cis-undecaprenyl phosphate + phosphate + H(+). In terms of biological role, catalyzes the dephosphorylation of undecaprenyl diphosphate (UPP). Confers resistance to bacitracin. The polypeptide is Undecaprenyl-diphosphatase 2 (Streptomyces coelicolor (strain ATCC BAA-471 / A3(2) / M145)).